Consider the following 632-residue polypeptide: MAU2 chromatid cohesion factor homolog (632 aa).

TPR repeat units follow at residues 453–486 and 493–526; these read GGFYYVQGLHAFHKNSFHEAKRFLRETLKMANAE and SCSLVLLSHVFLSIGNSKESMNMVTPAMQLASKI.

It belongs to the SCC4/mau-2 family. In terms of assembly, interacts with Nipped-B to form the cohesin loading complex.

It is found in the nucleus. It localises to the nucleoplasm. Required for association of the cohesin complex with chromatin during interphase. Plays a role in sister chromatid cohesion and normal progression through prometaphase. The polypeptide is MAU2 chromatid cohesion factor homolog (Drosophila melanogaster (Fruit fly)).